Here is a 278-residue protein sequence, read N- to C-terminus: Ribosomal RNA small subunit methyltransferase A (278 aa).

Positions 28, 30, 55, 77, 103, and 122 each coordinate S-adenosyl-L-methionine.

Belongs to the class I-like SAM-binding methyltransferase superfamily. rRNA adenine N(6)-methyltransferase family. RsmA subfamily.

The protein localises to the cytoplasm. It carries out the reaction adenosine(1518)/adenosine(1519) in 16S rRNA + 4 S-adenosyl-L-methionine = N(6)-dimethyladenosine(1518)/N(6)-dimethyladenosine(1519) in 16S rRNA + 4 S-adenosyl-L-homocysteine + 4 H(+). Specifically dimethylates two adjacent adenosines (A1518 and A1519) in the loop of a conserved hairpin near the 3'-end of 16S rRNA in the 30S particle. May play a critical role in biogenesis of 30S subunits. This Cereibacter sphaeroides (strain ATCC 17029 / ATH 2.4.9) (Rhodobacter sphaeroides) protein is Ribosomal RNA small subunit methyltransferase A.